The primary structure comprises 118 residues: Beta-2-microglobulin (118 aa).

The first 21 residues, 1–21 (MESRWGIVVIGLLCCVSWVEA), serve as a signal peptide directing secretion. The Ig-like C1-type domain occupies 26-113 (PKIQVYTRSP…THNSVTKSVK (88 aa)). A disulfide bond links Cys-46 and Cys-101.

The protein belongs to the beta-2-microglobulin family. As to quaternary structure, heterodimer of an alpha chain and a beta chain. Beta-2-microglobulin is the beta-chain of major histocompatibility complex class I molecules.

It localises to the secreted. Component of the class I major histocompatibility complex (MHC). Involved in the presentation of peptide antigens to the immune system. The polypeptide is Beta-2-microglobulin (B2M) (Tachyglossus aculeatus aculeatus (Southeast Australian short-beaked echidna)).